A 209-amino-acid chain; its full sequence is Dof zinc finger protein DOF1.6 (209 aa).

The segment covering 1-17 has biased composition (polar residues); the sequence is MPSEPNQTRPTRVQPST. The disordered stretch occupies residues 1-29; sequence MPSEPNQTRPTRVQPSTAAYPPPNLAEPL. The segment covering 20-29 has biased composition (pro residues); sequence YPPPNLAEPL. The segment at 29-83 adopts a Dof-type zinc-finger fold; the sequence is LPCPRCNSTTTKFCYYNNYNLAQPRYYCKSCRRYWTQGGTLRDVPVGGGTRRSSS. 4 residues coordinate Zn(2+): C31, C34, C56, and C59. The interval 70–116 is disordered; that stretch reads RDVPVGGGTRRSSSKRHRSFSTTATSSSSSSSVITTTTQEPATTEAS. Residues 89–116 show a composition bias toward low complexity; sequence FSTTATSSSSSSSVITTTTQEPATTEAS.

Its subcellular location is the nucleus. Functionally, transcription factor that binds specifically to a 5'-AA[AG]G-3' consensus core sequence. This is Dof zinc finger protein DOF1.6 (DOF1.6) from Arabidopsis thaliana (Mouse-ear cress).